The following is a 425-amino-acid chain: Glutamyl-tRNA reductase (425 aa).

Substrate contacts are provided by residues 49 to 52, S109, 114 to 116, and Q120; these read TCNR and EGQ. The active-site Nucleophile is the C50. 189–194 is an NADP(+) binding site; sequence GAGETG.

The protein belongs to the glutamyl-tRNA reductase family. Homodimer.

It carries out the reaction (S)-4-amino-5-oxopentanoate + tRNA(Glu) + NADP(+) = L-glutamyl-tRNA(Glu) + NADPH + H(+). It functions in the pathway porphyrin-containing compound metabolism; protoporphyrin-IX biosynthesis; 5-aminolevulinate from L-glutamyl-tRNA(Glu): step 1/2. Its pathway is porphyrin-containing compound metabolism; chlorophyll biosynthesis. Functionally, catalyzes the NADPH-dependent reduction of glutamyl-tRNA(Glu) to glutamate 1-semialdehyde (GSA). The sequence is that of Glutamyl-tRNA reductase from Chlorobium phaeovibrioides (strain DSM 265 / 1930) (Prosthecochloris vibrioformis (strain DSM 265)).